We begin with the raw amino-acid sequence, 134 residues long: Cytochrome b (134 aa).

3 consecutive transmembrane segments (helical) span residues 33–53 (FGSL…FLAM), 77–98 (WILR…FLHV), and 113–133 (WNIG…GYVL). Residues histidine 83 and histidine 97 each contribute to the heme b site.

Belongs to the cytochrome b family. In terms of assembly, the cytochrome bc1 complex contains 11 subunits: 3 respiratory subunits (MT-CYB, CYC1 and UQCRFS1), 2 core proteins (UQCRC1 and UQCRC2) and 6 low-molecular weight proteins (UQCRH/QCR6, UQCRB/QCR7, UQCRQ/QCR8, UQCR10/QCR9, UQCR11/QCR10 and a cleavage product of UQCRFS1). This cytochrome bc1 complex then forms a dimer. Heme b serves as cofactor.

It localises to the mitochondrion inner membrane. Component of the ubiquinol-cytochrome c reductase complex (complex III or cytochrome b-c1 complex) that is part of the mitochondrial respiratory chain. The b-c1 complex mediates electron transfer from ubiquinol to cytochrome c. Contributes to the generation of a proton gradient across the mitochondrial membrane that is then used for ATP synthesis. The polypeptide is Cytochrome b (MT-CYB) (Rhinolophus hipposideros (Lesser horseshoe bat)).